Reading from the N-terminus, the 436-residue chain is Eukaryotic translation initiation factor 5 (436 aa).

GTP is bound at residue 27–34 (GKGNGIKT). The interval 177–203 (NSDKGSSNDDDDDDWEPEPVEPNGMLS) is disordered. Acidic residues predominate over residues 184–195 (NDDDDDDWEPEP). One can recognise a W2 domain in the interval 216-379 (EKSEEQRLDM…KEAEEETEEE (164 aa)). Residues 396 to 408 (LRQQKEKAAREAQ) show a composition bias toward basic and acidic residues. A disordered region spans residues 396-436 (LRQQKEKAAREAQQKSAKATNGNAAAASGANDEEDLDIDDI). The span at 409–425 (QKSAKATNGNAAAASGA) shows a compositional bias: low complexity. Residues 426-436 (NDEEDLDIDDI) are compositionally biased toward acidic residues.

Belongs to the eIF-2-beta/eIF-5 family.

In terms of biological role, catalyzes the hydrolysis of GTP bound to the 40S ribosomal initiation complex (40S.mRNA.Met-tRNA[F].eIF-2.GTP) with the subsequent joining of a 60S ribosomal subunit resulting in the release of eIF-2 and the guanine nucleotide. The subsequent joining of a 60S ribosomal subunit results in the formation of a functional 80S initiation complex (80S.mRNA.Met-tRNA[F]). This is Eukaryotic translation initiation factor 5 from Caenorhabditis elegans.